A 527-amino-acid polypeptide reads, in one-letter code: Bifunctional purine biosynthesis protein PurH (527 aa).

One can recognise an MGS-like domain in the interval 1–149 (MASDFLPVRR…KNFARVAVAT (149 aa)).

Belongs to the PurH family.

It carries out the reaction (6R)-10-formyltetrahydrofolate + 5-amino-1-(5-phospho-beta-D-ribosyl)imidazole-4-carboxamide = 5-formamido-1-(5-phospho-D-ribosyl)imidazole-4-carboxamide + (6S)-5,6,7,8-tetrahydrofolate. The enzyme catalyses IMP + H2O = 5-formamido-1-(5-phospho-D-ribosyl)imidazole-4-carboxamide. The protein operates within purine metabolism; IMP biosynthesis via de novo pathway; 5-formamido-1-(5-phospho-D-ribosyl)imidazole-4-carboxamide from 5-amino-1-(5-phospho-D-ribosyl)imidazole-4-carboxamide (10-formyl THF route): step 1/1. It functions in the pathway purine metabolism; IMP biosynthesis via de novo pathway; IMP from 5-formamido-1-(5-phospho-D-ribosyl)imidazole-4-carboxamide: step 1/1. The polypeptide is Bifunctional purine biosynthesis protein PurH (Xanthomonas euvesicatoria pv. vesicatoria (strain 85-10) (Xanthomonas campestris pv. vesicatoria)).